Reading from the N-terminus, the 332-residue chain is L-lactate dehydrogenase A chain (332 aa).

Ala2 carries the post-translational modification N-acetylalanine. Lys5 carries the post-translational modification N6-acetyllysine; alternate. N6-succinyllysine; alternate is present on Lys5. Position 14 is an N6-acetyllysine (Lys14). Residue 29-57 (GAVGMACAISILMKELADEIALVDVMEDK) coordinates NAD(+). N6-acetyllysine; alternate is present on Lys57. Lys57 participates in a covalent cross-link: Glycyl lysine isopeptide (Lys-Gly) (interchain with G-Cter in SUMO2); alternate. The residue at position 81 (Lys81) is an N6-acetyllysine. Arg99 is a binding site for NAD(+). Substrate is bound at residue Arg106. The residue at position 118 (Lys118) is an N6-acetyllysine; alternate. N6-succinyllysine; alternate is present on Lys118. Position 126 is an N6-acetyllysine (Lys126). Asn138 is a binding site for NAD(+). Substrate is bound by residues Asn138 and Arg169. His193 functions as the Proton acceptor in the catalytic mechanism. Residues Lys224 and Lys232 each carry the N6-acetyllysine modification. Tyr239 carries the post-translational modification Phosphotyrosine. An N6-acetyllysine modification is found at Lys243. Thr248 lines the substrate pocket. Thr309 is subject to Phosphothreonine. Lys318 is modified (N6-acetyllysine; alternate). Position 318 is an N6-succinyllysine; alternate (Lys318). Position 322 is a phosphothreonine (Thr322).

Belongs to the LDH/MDH superfamily. LDH family. In terms of assembly, homotetramer. Interacts with PTEN upstream reading frame protein MP31. In terms of processing, ISGylated.

The protein localises to the cytoplasm. The catalysed reaction is (S)-lactate + NAD(+) = pyruvate + NADH + H(+). It functions in the pathway fermentation; pyruvate fermentation to lactate; (S)-lactate from pyruvate: step 1/1. Interconverts simultaneously and stereospecifically pyruvate and lactate with concomitant interconversion of NADH and NAD(+). The polypeptide is L-lactate dehydrogenase A chain (LDHA) (Sus scrofa (Pig)).